The following is a 241-amino-acid chain: Large ribosomal subunit protein uL1 (241 aa).

The protein belongs to the universal ribosomal protein uL1 family. In terms of assembly, part of the 50S ribosomal subunit.

In terms of biological role, binds directly to 23S rRNA. The L1 stalk is quite mobile in the ribosome, and is involved in E site tRNA release. Its function is as follows. Protein L1 is also a translational repressor protein, it controls the translation of the L11 operon by binding to its mRNA. The chain is Large ribosomal subunit protein uL1 from Streptomyces avermitilis (strain ATCC 31267 / DSM 46492 / JCM 5070 / NBRC 14893 / NCIMB 12804 / NRRL 8165 / MA-4680).